A 476-amino-acid polypeptide reads, in one-letter code: Glutamate--tRNA ligase (476 aa).

The 'HIGH' region signature appears at 9–19 (PSPTGTLHLGT). A 'KMSKS' region motif is present at residues 248–252 (KLSKR). ATP is bound at residue Lys-251.

This sequence belongs to the class-I aminoacyl-tRNA synthetase family. Glutamate--tRNA ligase type 1 subfamily. In terms of assembly, monomer.

Its subcellular location is the cytoplasm. The catalysed reaction is tRNA(Glu) + L-glutamate + ATP = L-glutamyl-tRNA(Glu) + AMP + diphosphate. In terms of biological role, catalyzes the attachment of glutamate to tRNA(Glu) in a two-step reaction: glutamate is first activated by ATP to form Glu-AMP and then transferred to the acceptor end of tRNA(Glu). The sequence is that of Glutamate--tRNA ligase from Prochlorococcus marinus (strain NATL2A).